We begin with the raw amino-acid sequence, 269 residues long: Dihydropteroate synthase (269 aa).

Residues 14 to 261 (TYIMGILNFT…DVLENSRAAK (248 aa)) form the Pterin-binding domain. N21 contacts Mg(2+). Residues T61, D95, N114, D178, K214, and 249 to 251 (RVH) contribute to the (7,8-dihydropterin-6-yl)methyl diphosphate site.

Belongs to the DHPS family. Requires Mg(2+) as cofactor.

It catalyses the reaction (7,8-dihydropterin-6-yl)methyl diphosphate + 4-aminobenzoate = 7,8-dihydropteroate + diphosphate. It functions in the pathway cofactor biosynthesis; tetrahydrofolate biosynthesis; 7,8-dihydrofolate from 2-amino-4-hydroxy-6-hydroxymethyl-7,8-dihydropteridine diphosphate and 4-aminobenzoate: step 1/2. Functionally, catalyzes the condensation of para-aminobenzoate (pABA) with 6-hydroxymethyl-7,8-dihydropterin diphosphate (DHPt-PP) to form 7,8-dihydropteroate (H2Pte), the immediate precursor of folate derivatives. This is Dihydropteroate synthase from Clostridium beijerinckii (strain ATCC 51743 / NCIMB 8052) (Clostridium acetobutylicum).